A 148-amino-acid chain; its full sequence is Protein E6 (148 aa).

2 zinc fingers span residues 29-65 (CVFC…CARC) and 102-138 (CYTC…CAYC).

It belongs to the papillomaviridae E6 protein family. In terms of assembly, forms homodimers. Interacts with ubiquitin-protein ligase UBE3A/E6-AP; this interaction stimulates UBE3A ubiquitin activity. Interacts with host TP53 and EP300; this interaction inhibits TP53 activity.

The protein resides in the host cytoplasm. Its subcellular location is the host nucleus. Its function is as follows. Plays a major role in the induction and maintenance of cellular transformation. E6 associates with host UBE3A/E6-AP ubiquitin-protein ligase and modulates its activity. Sequesters tumor suppressor TP53 in the host cytoplasm and modulates its activity by interacting with host EP300 that results in the reduction of TP53 acetylation and activation. In turn, apoptosis induced by DNA damage is inhibited. E6 also protects host keratinocytes from apoptosis by mediating the degradation of host BAK1. May also inhibit host immune response. The sequence is that of Protein E6 from Homo sapiens (Human).